The chain runs to 607 residues: DNA mismatch repair protein MutL (607 aa).

It belongs to the DNA mismatch repair MutL/HexB family.

Its function is as follows. This protein is involved in the repair of mismatches in DNA. It is required for dam-dependent methyl-directed DNA mismatch repair. May act as a 'molecular matchmaker', a protein that promotes the formation of a stable complex between two or more DNA-binding proteins in an ATP-dependent manner without itself being part of a final effector complex. This Anaeromyxobacter sp. (strain K) protein is DNA mismatch repair protein MutL.